A 432-amino-acid chain; its full sequence is Casein kinase II subunit alpha-4, chloroplastic (432 aa).

Residues 1–55 constitute a chloroplast transit peptide; it reads MALRPCTGFTISSLRNASAANNNLFSLLSFSSSSPAKRNLLLSSLQDNLRRFASS. The tract at residues 63 to 83 is disordered; that stretch reads LRNQQQQHQQQQQSRVKEKSE. Residues 66-75 show a composition bias toward low complexity; sequence QQQQHQQQQQ. A Protein kinase domain is found at 132-417; the sequence is YEVVRKVGRG…AKEAMAHPYF (286 aa). ATP contacts are provided by residues 138–146 and Lys-161; that span reads VGRGKYSEV. Asp-249 functions as the Proton acceptor in the catalytic mechanism.

This sequence belongs to the protein kinase superfamily. Ser/Thr protein kinase family. CK2 subfamily. Tetramer of two alpha and two beta chains. As to expression, expressed in root tips, lateral root primordia, cotyledons, leaf primordia, sepals, filaments, stigma, and anthers.

It localises to the plastid. It is found in the chloroplast. The catalysed reaction is L-seryl-[protein] + ATP = O-phospho-L-seryl-[protein] + ADP + H(+). It catalyses the reaction L-threonyl-[protein] + ATP = O-phospho-L-threonyl-[protein] + ADP + H(+). Casein kinases are operationally defined by their preferential utilization of acidic proteins such as caseins as substrates. The alpha chain contains the catalytic site. Involved in the regulation of various developmental processes. Involved in the regulation of plant growth and flowering time. Involved in retrograde signaling in plant responses to abscisic acid (ABA) and heat stress. May act as an enhancing factor in abiotic stress signaling through modulation of the expression of some molecular players in retrograde signaling. Phosphorylates RuBisCo activase (RCA) at Thr-78. The protein is Casein kinase II subunit alpha-4, chloroplastic of Arabidopsis thaliana (Mouse-ear cress).